The sequence spans 121 residues: Small ribosomal subunit protein uS13 (121 aa).

Residues 91–121 form a disordered region; that stretch reads HRKGLPLRGQRTRTNARTRKGPRKAGVALKK.

The protein belongs to the universal ribosomal protein uS13 family. In terms of assembly, part of the 30S ribosomal subunit. Forms a loose heterodimer with protein S19. Forms two bridges to the 50S subunit in the 70S ribosome.

Located at the top of the head of the 30S subunit, it contacts several helices of the 16S rRNA. In the 70S ribosome it contacts the 23S rRNA (bridge B1a) and protein L5 of the 50S subunit (bridge B1b), connecting the 2 subunits; these bridges are implicated in subunit movement. Contacts the tRNAs in the A and P-sites. The sequence is that of Small ribosomal subunit protein uS13 from Cupriavidus pinatubonensis (strain JMP 134 / LMG 1197) (Cupriavidus necator (strain JMP 134)).